The primary structure comprises 308 residues: FGSLLGICLATQIITGLLMAMHYTADTTLAFTSVAHTCRNVQFGWLIRNLHANGASMFFICIYLHIGRGLYYGSYLFKETWNTGVILLLTLMATAFVGYVLPWGQMSFWGATVITNLFSAIPYIGQTIVEWAWGGFSVDNPTLTRFFALHFLLPFIITGLTLVHLTFLHETGSNNPLGIPSECDKIPFHPYFSIKDILGFMAMLLPLMSLAMFSPNLLGDPENFTPANPLVTPLHIKPEWYFLFAYAILRSIPNKLGGVLALAASVLILFLIPFLHKSKQRTMTFRPLSQLMFWILVANLLILTWVGS.

A run of 4 helical transmembrane segments spans residues 1–21, 45–66, 81–101, and 146–166; these read FGSL…LMAM, WLIR…YLHI, WNTG…GYVL, and FFAL…VHLT. Heme b is bound by residues H51 and H65. Heme b-binding residues include H150 and H164. Position 169 (H169) interacts with a ubiquinone. Helical transmembrane passes span 194–214, 256–276, and 288–308; these read IKDI…AMFS, LGGV…PFLH, and LSQL…WVGS.

It belongs to the cytochrome b family. In terms of assembly, the cytochrome bc1 complex contains 11 subunits: 3 respiratory subunits (MT-CYB, CYC1 and UQCRFS1), 2 core proteins (UQCRC1 and UQCRC2) and 6 low-molecular weight proteins (UQCRH/QCR6, UQCRB/QCR7, UQCRQ/QCR8, UQCR10/QCR9, UQCR11/QCR10 and a cleavage product of UQCRFS1). This cytochrome bc1 complex then forms a dimer. It depends on heme b as a cofactor.

The protein localises to the mitochondrion inner membrane. Its function is as follows. Component of the ubiquinol-cytochrome c reductase complex (complex III or cytochrome b-c1 complex) that is part of the mitochondrial respiratory chain. The b-c1 complex mediates electron transfer from ubiquinol to cytochrome c. Contributes to the generation of a proton gradient across the mitochondrial membrane that is then used for ATP synthesis. The protein is Cytochrome b (MT-CYB) of Scytalopus magellanicus (Magellanic tapaculo).